Consider the following 110-residue polypeptide: Ig kappa chain V region 3547 (110 aa).

The framework-1 stretch occupies residues 1–23 (AYDMTQTPSSVSAAVGGTVTINC). The tract at residues 24 to 34 (QASEDISANLA) is complementarity-determining-1. Residues 35-49 (WYQQKPGQPPKLLIY) form a framework-2 region. The complementarity-determining-2 stretch occupies residues 50 to 56 (AASDLAS). The interval 57-88 (GVPSRFKGSGSGTEYTLTISGVQCADAATYYC) is framework-3. The complementarity-determining-3 stretch occupies residues 89-99 (QSADYSGSAVT). A framework-4 region spans residues 100–109 (FGGGTEVVVK).

In Oryctolagus cuniculus (Rabbit), this protein is Ig kappa chain V region 3547.